The following is a 233-amino-acid chain: 2,3,4,5-tetrahydropyridine-2,6-dicarboxylate N-acetyltransferase (233 aa).

Belongs to the transferase hexapeptide repeat family. DapH subfamily.

It carries out the reaction (S)-2,3,4,5-tetrahydrodipicolinate + acetyl-CoA + H2O = L-2-acetamido-6-oxoheptanedioate + CoA. It participates in amino-acid biosynthesis; L-lysine biosynthesis via DAP pathway; LL-2,6-diaminopimelate from (S)-tetrahydrodipicolinate (acetylase route): step 1/3. Functionally, catalyzes the transfer of an acetyl group from acetyl-CoA to tetrahydrodipicolinate. The sequence is that of 2,3,4,5-tetrahydropyridine-2,6-dicarboxylate N-acetyltransferase from Thermosipho africanus (strain TCF52B).